A 240-amino-acid chain; its full sequence is Transcriptional regulatory protein rxt2 (240 aa).

The protein belongs to the RXT2 family. As to quaternary structure, component of the RPD3C(L) complex.

The protein resides in the nucleus. Component of the RPD3C(L) histone deacetylase complex (HDAC) responsible for the deacetylation of lysine residues on the N-terminal part of the core histones (H2A, H2B, H3 and H4). Histone deacetylation gives a tag for epigenetic repression and plays an important role in transcriptional regulation, cell cycle progression and developmental events. In Schizosaccharomyces pombe (strain 972 / ATCC 24843) (Fission yeast), this protein is Transcriptional regulatory protein rxt2 (rtx2).